The chain runs to 154 residues: Transcriptional repressor NrdR (154 aa).

A zinc finger spans residues 3–34 (CPFCRHPDSRVVDSREADEGQAIRRRRSCPEC). In terms of domain architecture, ATP-cone spans 46–136 (LAVVKRSGVT…VYRGFSSAED (91 aa)).

The protein belongs to the NrdR family. It depends on Zn(2+) as a cofactor.

Negatively regulates transcription of bacterial ribonucleotide reductase nrd genes and operons by binding to NrdR-boxes. The polypeptide is Transcriptional repressor NrdR (Mycobacteroides abscessus (strain ATCC 19977 / DSM 44196 / CCUG 20993 / CIP 104536 / JCM 13569 / NCTC 13031 / TMC 1543 / L948) (Mycobacterium abscessus)).